The chain runs to 460 residues: Argininosuccinate lyase (460 aa).

Belongs to the lyase 1 family. Argininosuccinate lyase subfamily.

The protein resides in the cytoplasm. The catalysed reaction is 2-(N(omega)-L-arginino)succinate = fumarate + L-arginine. The protein operates within amino-acid biosynthesis; L-arginine biosynthesis; L-arginine from L-ornithine and carbamoyl phosphate: step 3/3. The sequence is that of Argininosuccinate lyase from Solibacter usitatus (strain Ellin6076).